The following is a 484-amino-acid chain: Ubiquinone biosynthesis monooxygenase COQ6, mitochondrial (484 aa).

Residues 1–41 (MLSLAKAKLAVVGIGRQCVAVRTLNGARAVHRSFSSSEHDQ) constitute a mitochondrion transit peptide.

This sequence belongs to the UbiH/COQ6 family. As to quaternary structure, component of a multi-subunit COQ enzyme complex, composed of at least coq3, coq4, coq5, coq6, coq7 and coq9. Interacts with coq8b and coq7. The cofactor is FAD.

It localises to the mitochondrion inner membrane. The protein resides in the golgi apparatus. It is found in the cell projection. It catalyses the reaction a 4-hydroxy-3-(all-trans-polyprenyl)benzoate + 2 reduced [2Fe-2S]-[ferredoxin] + O2 + 2 H(+) = a 3,4-dihydroxy-5-(all-trans-polyprenyl)benzoate + 2 oxidized [2Fe-2S]-[ferredoxin] + H2O. The catalysed reaction is a 2-methoxy-6-(all-trans-polyprenyl)phenol + 2 reduced [2Fe-2S]-[ferredoxin] + O2 + 2 H(+) = a 2-methoxy-6-(all-trans-polyprenyl)benzene-1,4-diol + 2 oxidized [2Fe-2S]-[ferredoxin] + H2O. It participates in cofactor biosynthesis; ubiquinone biosynthesis. FAD-dependent monooxygenase required for two non-consecutive steps during ubiquinone biosynthesis. Required for the C5-ring hydroxylation during ubiquinone biosynthesis by catalyzing the hydroxylation of 4-hydroxy-3-(all-trans-polyprenyl)benzoic acid to 3,4-dihydroxy-5-(all-trans-polyprenyl)benzoic acid. Also acts downstream of coq4, for the C1-hydroxylation during ubiquinone biosynthesis by catalyzing the hydroxylation of 2-methoxy-6-(all-trans-polyprenyl)phenol to 2-methoxy-6-(all-trans-polyprenyl)benzene-1,4-diol. The electrons required for the hydroxylation reaction are funneled indirectly to coq6 from NADPH via a ferredoxin/ferredoxin reductase system. The polypeptide is Ubiquinone biosynthesis monooxygenase COQ6, mitochondrial (Danio rerio (Zebrafish)).